The sequence spans 447 residues: Cobyrinate a,c-diamide synthase (447 aa).

In terms of domain architecture, GATase cobBQ-type spans 252–439 (KIAIAFDESF…AHQHAVGNPY (188 aa)). Cys331 functions as the Nucleophile in the catalytic mechanism.

Belongs to the CobB/CbiA family. Requires Mg(2+) as cofactor.

It carries out the reaction cob(II)yrinate + 2 L-glutamine + 2 ATP + 2 H2O = cob(II)yrinate a,c diamide + 2 L-glutamate + 2 ADP + 2 phosphate + 2 H(+). The enzyme catalyses Ni-sirohydrochlorin + 2 L-glutamine + 2 ATP + 2 H2O = Ni-sirohydrochlorin a,c-diamide + 2 L-glutamate + 2 ADP + 2 phosphate + 2 H(+). Its pathway is cofactor biosynthesis; adenosylcobalamin biosynthesis; cob(II)yrinate a,c-diamide from sirohydrochlorin (anaerobic route): step 10/10. Its function is as follows. Catalyzes the ATP-dependent amidation of the two carboxylate groups at positions a and c of cobyrinate, using either L-glutamine or ammonia as the nitrogen source. Involved in the biosynthesis of the unique nickel-containing tetrapyrrole coenzyme F430, the prosthetic group of methyl-coenzyme M reductase (MCR), which plays a key role in methanogenesis and anaerobic methane oxidation. Catalyzes the ATP-dependent amidation of the two carboxylate groups at positions a and c of Ni-sirohydrochlorin, using L-glutamine or ammonia as the nitrogen source. This chain is Cobyrinate a,c-diamide synthase, found in Methanococcus vannielii (strain ATCC 35089 / DSM 1224 / JCM 13029 / OCM 148 / SB).